The sequence spans 338 residues: 3-keto-steroid reductase erg27 (338 aa).

NADP(+)-binding residues include L16, T44, K50, and D75. Residues S180 and Y203 each act as proton donor in the active site. Residues Y203, K207, and T236 each coordinate NADP(+). K207 functions as the Lowers pKa of active site Tyr in the catalytic mechanism.

The protein belongs to the short-chain dehydrogenases/reductases (SDR) family. ERG27 subfamily. As to quaternary structure, heterotetramer of erg25, erg26, erg27 and erg28. Erg28 acts as a scaffold to tether erg27 and other 4,4-demethylation-related enzymes, forming a demethylation enzyme complex, in the endoplasmic reticulum.

The catalysed reaction is 3-dehydro-4alpha-methylzymosterol + NADPH + H(+) = 4alpha-methylzymosterol + NADP(+). It functions in the pathway steroid biosynthesis; zymosterol biosynthesis; zymosterol from lanosterol: step 5/6. Its pathway is steroid metabolism; ergosterol biosynthesis. 3-keto-steroid reductase; part of the third module of ergosterol biosynthesis pathway that includes by the late steps of the pathway. Erg27 is a catalytic component of the C-4 demethylation complex that catalyze the reduction of the keto group on the C-3. The third module or late pathway involves the ergosterol synthesis itself through consecutive reactions that mainly occur in the endoplasmic reticulum (ER) membrane. Firstly, the squalene synthase erg9 catalyzes the condensation of 2 farnesyl pyrophosphate moieties to form squalene, which is the precursor of all steroids. Secondly, squalene is converted into lanosterol by the consecutive action of the squalene epoxidase erg1 and the lanosterol synthase erg7. The lanosterol 14-alpha-demethylase erg11/cyp1 catalyzes C14-demethylation of lanosterol to produce 4,4'-dimethyl cholesta-8,14,24-triene-3-beta-ol. In the next steps, a complex process involving various demethylation, reduction and desaturation reactions catalyzed by the C-14 reductase erg24 and the C-4 demethylation complex erg25-erg26-erg27 leads to the production of zymosterol. Erg28 likely functions in the C-4 demethylation complex reaction by tethering erg26 and Erg27 to the endoplasmic reticulum or to facilitate interaction between these proteins. Then, the sterol 24-C-methyltransferase erg6 catalyzes the methyl transfer from S-adenosyl-methionine to the C-24 of zymosterol to form fecosterol. The C-8 sterol isomerase erg2 catalyzes the reaction which results in unsaturation at C-7 in the B ring of sterols and thus converts fecosterol to episterol. The sterol-C5-desaturases erg31 and erg32 then catalyze the introduction of a C-5 double bond in the B ring to produce 5-dehydroepisterol. The C-22 sterol desaturase erg5 further converts 5-dehydroepisterol into ergosta-5,7,22,24(28)-tetraen-3beta-ol by forming the C-22(23) double bond in the sterol side chain. Finally, ergosta-5,7,22,24(28)-tetraen-3beta-ol is substrate of the C-24(28) sterol reductase erg4 to produce ergosterol. In the genus Schizosaccharomyces, a second route exists between lanosterol and fecosterol, via the methylation of lanosterol to eburicol by erg6, followed by C14-demethylation by erg11/cyp1 and C4-demethylation by the demethylation complex erg25-erg26-erg27. The protein is 3-keto-steroid reductase erg27 of Schizosaccharomyces pombe (strain 972 / ATCC 24843) (Fission yeast).